Reading from the N-terminus, the 461-residue chain is Cysteine--tRNA ligase (461 aa).

Residue cysteine 28 coordinates Zn(2+). The 'HIGH' region motif lies at 30–40 (VTIYDLCHIGH). Zn(2+) contacts are provided by cysteine 209, histidine 234, and glutamate 238. Residues 266 to 270 (KMSKS) carry the 'KMSKS' region motif. ATP is bound at residue lysine 269.

This sequence belongs to the class-I aminoacyl-tRNA synthetase family. In terms of assembly, monomer. The cofactor is Zn(2+).

The protein localises to the cytoplasm. The enzyme catalyses tRNA(Cys) + L-cysteine + ATP = L-cysteinyl-tRNA(Cys) + AMP + diphosphate. The sequence is that of Cysteine--tRNA ligase from Serratia proteamaculans (strain 568).